The following is a 332-amino-acid chain: Leucine carboxyl methyltransferase 1 (332 aa).

The segment at 1–23 (MAASLRRPSFTTCSSPTDTDDEG) is disordered. S-adenosyl-L-methionine contacts are provided by residues R71, G96, D120, 169 to 170 (DL), and E196.

It belongs to the methyltransferase superfamily. LCMT family.

It carries out the reaction [phosphatase 2A protein]-C-terminal L-leucine + S-adenosyl-L-methionine = [phosphatase 2A protein]-C-terminal L-leucine methyl ester + S-adenosyl-L-homocysteine. Its function is as follows. Methylates the carboxyl group of the C-terminal leucine residue of protein phosphatase 2A catalytic subunits to form alpha-leucine ester residues. The sequence is that of Leucine carboxyl methyltransferase 1 (LCMT1) from Bos taurus (Bovine).